The chain runs to 152 residues: 6,7-dimethyl-8-ribityllumazine synthase (152 aa).

5-amino-6-(D-ribitylamino)uracil-binding positions include F21, 55-57, and 79-81; these read AFE and CVI. 84 to 85 is a binding site for (2S)-2-hydroxy-3-oxobutyl phosphate; sequence AT. Residue H87 is the Proton donor of the active site. F112 is a binding site for 5-amino-6-(D-ribitylamino)uracil. Residue R126 coordinates (2S)-2-hydroxy-3-oxobutyl phosphate.

The protein belongs to the DMRL synthase family. As to quaternary structure, forms an icosahedral capsid composed of 60 subunits, arranged as a dodecamer of pentamers.

The enzyme catalyses (2S)-2-hydroxy-3-oxobutyl phosphate + 5-amino-6-(D-ribitylamino)uracil = 6,7-dimethyl-8-(1-D-ribityl)lumazine + phosphate + 2 H2O + H(+). It participates in cofactor biosynthesis; riboflavin biosynthesis; riboflavin from 2-hydroxy-3-oxobutyl phosphate and 5-amino-6-(D-ribitylamino)uracil: step 1/2. Its function is as follows. Catalyzes the formation of 6,7-dimethyl-8-ribityllumazine by condensation of 5-amino-6-(D-ribitylamino)uracil with 3,4-dihydroxy-2-butanone 4-phosphate. This is the penultimate step in the biosynthesis of riboflavin. This is 6,7-dimethyl-8-ribityllumazine synthase from Staphylococcus haemolyticus (strain JCSC1435).